Consider the following 436-residue polypeptide: ATP-dependent protease ATPase subunit HslU (436 aa).

ATP-binding positions include Ile-18, 60–65 (GVGKTE), Asp-250, Glu-314, and Arg-386.

This sequence belongs to the ClpX chaperone family. HslU subfamily. A double ring-shaped homohexamer of HslV is capped on each side by a ring-shaped HslU homohexamer. The assembly of the HslU/HslV complex is dependent on binding of ATP.

It is found in the cytoplasm. Its function is as follows. ATPase subunit of a proteasome-like degradation complex; this subunit has chaperone activity. The binding of ATP and its subsequent hydrolysis by HslU are essential for unfolding of protein substrates subsequently hydrolyzed by HslV. HslU recognizes the N-terminal part of its protein substrates and unfolds these before they are guided to HslV for hydrolysis. This Mesorhizobium japonicum (strain LMG 29417 / CECT 9101 / MAFF 303099) (Mesorhizobium loti (strain MAFF 303099)) protein is ATP-dependent protease ATPase subunit HslU.